The following is a 147-amino-acid chain: Acidic phospholipase A2 beta-bungarotoxin A3 chain (147 aa).

The first 19 residues, 1–19 (MYPAHLLVLSAVCVSLLGA), serve as a signal peptide directing secretion. The propeptide occupies 20–27 (ANIPPHPL). 6 disulfide bridges follow: C54/C146, C56/C72, C71/C127, C78/C120, C88/C113, and C106/C118. Ca(2+)-binding residues include Y55, G57, and G59. H75 is an active-site residue. A Ca(2+)-binding site is contributed by D76. D121 is an active-site residue.

The protein belongs to the phospholipase A2 family. Group I subfamily. D49 sub-subfamily. In terms of assembly, heterodimer; disulfide-linked. The A chains have phospholipase A2 activity and the B chains show homology with the basic protease inhibitors. The A3 chain is found in beta-5 bungarotoxins. The cofactor is Ca(2+). In terms of tissue distribution, expressed by the venom gland.

Its subcellular location is the secreted. It carries out the reaction a 1,2-diacyl-sn-glycero-3-phosphocholine + H2O = a 1-acyl-sn-glycero-3-phosphocholine + a fatty acid + H(+). Functionally, snake venom phospholipase A2 (PLA2) that inhibits neuromuscular transmission by blocking acetylcholine release from the nerve termini. PLA2 catalyzes the calcium-dependent hydrolysis of the 2-acyl groups in 3-sn-phosphoglycerides. This is Acidic phospholipase A2 beta-bungarotoxin A3 chain from Bungarus multicinctus (Many-banded krait).